The chain runs to 243 residues: Carboxy-S-adenosyl-L-methionine synthase (243 aa).

Residues tyrosine 40, 65 to 67 (GCS), 90 to 91 (DN), 118 to 119 (DI), asparagine 133, and arginine 200 each bind S-adenosyl-L-methionine.

This sequence belongs to the class I-like SAM-binding methyltransferase superfamily. Cx-SAM synthase family. In terms of assembly, homodimer.

The catalysed reaction is prephenate + S-adenosyl-L-methionine = carboxy-S-adenosyl-L-methionine + 3-phenylpyruvate + H2O. Its function is as follows. Catalyzes the conversion of S-adenosyl-L-methionine (SAM) to carboxy-S-adenosyl-L-methionine (Cx-SAM). This is Carboxy-S-adenosyl-L-methionine synthase from Shewanella amazonensis (strain ATCC BAA-1098 / SB2B).